The primary structure comprises 241 residues: Thiamine import ATP-binding protein ThiQ (241 aa).

The ABC transporter domain maps to 7–235; it reads IRLSDVRFSY…AGPEALRHYI (229 aa). An ATP-binding site is contributed by 37-44; it reads GPSGSGKS.

This sequence belongs to the ABC transporter superfamily. Thiamine importer (TC 3.A.1.19.1) family. As to quaternary structure, the complex is composed of two ATP-binding proteins (ThiQ), two transmembrane proteins (ThiP) and a solute-binding protein (ThiB).

Its subcellular location is the cell inner membrane. The catalysed reaction is thiamine(out) + ATP + H2O = thiamine(in) + ADP + phosphate + H(+). Its function is as follows. Part of the ABC transporter complex ThiBPQ involved in thiamine import. Responsible for energy coupling to the transport system. This chain is Thiamine import ATP-binding protein ThiQ, found in Brucella melitensis biotype 1 (strain ATCC 23456 / CCUG 17765 / NCTC 10094 / 16M).